Reading from the N-terminus, the 214-residue chain is uncharacterized protein (214 aa).

Functionally, URF2 product may be involved in the transfer of iron-sulfur clusters to the NADH dehydrogenase complex. It may also be required for the assembly of the NADH dehydrogenase complex. This is an uncharacterized protein from Paracoccus denitrificans.